The chain runs to 348 residues: Anthranilate phosphoribosyltransferase (348 aa).

Residues glycine 89, 92 to 93 (GD), threonine 97, 99 to 102 (NIST), 117 to 125 (KHGNRSASS), and serine 129 each bind 5-phospho-alpha-D-ribose 1-diphosphate. Glycine 89 lines the anthranilate pocket. Serine 101 contacts Mg(2+). Asparagine 120 provides a ligand contact to anthranilate. Arginine 175 lines the anthranilate pocket. Mg(2+)-binding residues include aspartate 234 and glutamate 235.

It belongs to the anthranilate phosphoribosyltransferase family. Homodimer. Mg(2+) is required as a cofactor.

It catalyses the reaction N-(5-phospho-beta-D-ribosyl)anthranilate + diphosphate = 5-phospho-alpha-D-ribose 1-diphosphate + anthranilate. Its pathway is amino-acid biosynthesis; L-tryptophan biosynthesis; L-tryptophan from chorismate: step 2/5. Its function is as follows. Catalyzes the transfer of the phosphoribosyl group of 5-phosphorylribose-1-pyrophosphate (PRPP) to anthranilate to yield N-(5'-phosphoribosyl)-anthranilate (PRA). The chain is Anthranilate phosphoribosyltransferase from Synechocystis sp. (strain ATCC 27184 / PCC 6803 / Kazusa).